A 60-amino-acid polypeptide reads, in one-letter code: VRDGYIRRKDEFKFKCYVDGKDCDDVCKSEGGSAGYCTALGFLCYCAGLPDDKAWKPTSS.

Residues 2–60 enclose the LCN-type CS-alpha/beta domain; it reads RDGYIRRKDEFKFKCYVDGKDCDDVCKSEGGSAGYCTALGFLCYCAGLPDDKAWKPTSS. Disulfide bonds link cysteine 16–cysteine 37, cysteine 23–cysteine 44, and cysteine 27–cysteine 46.

It belongs to the long (4 C-C) scorpion toxin superfamily. Sodium channel inhibitor family. Beta subfamily. In terms of tissue distribution, expressed by the venom gland.

The protein resides in the secreted. In terms of biological role, depressant insect toxins cause a transient contraction paralysis followed by a slow flaccid paralysis. They bind voltage-independently to sodium channels (Nav) and block action potentials, primarily by depolarizing the axonal membrane and suppressing the sodium current. In Androctonus crassicauda (Arabian fat-tailed scorpion), this protein is Putative insect toxin Acra6.